A 365-amino-acid polypeptide reads, in one-letter code: Putative agmatine deiminase (365 aa).

Residues Glu214 and Asp220 each contribute to the agmatine site. Residue Cys357 is the Amidino-cysteine intermediate of the active site.

Belongs to the agmatine deiminase family. Tetramer of two homodimers.

The catalysed reaction is agmatine + H2O = N-carbamoylputrescine + NH4(+). This chain is Putative agmatine deiminase, found in Enterococcus faecalis (strain ATCC 700802 / V583).